The following is a 400-amino-acid chain: Endoplasmin (400 aa).

N6-succinyllysine is present on lysine 1. An N-linked (GlcNAc...) asparagine glycan is attached at asparagine 42. A Phosphoserine modification is found at serine 44. N6-acetyllysine is present on lysine 76. N-linked (GlcNAc...) asparagine glycosylation is found at asparagine 78 and asparagine 99. At lysine 230 the chain carries N6-succinyllysine. Residues 346–400 (IDPEAQVEEEPEEEPEDTTEDTEQDEEEEVDAGTEEEEEEEQETAKESTAEKDEL) are disordered. The segment covering 350-387 (AQVEEEPEEEPEDTTEDTEQDEEEEVDAGTEEEEEEEQ) has biased composition (acidic residues). The residue at position 379 (threonine 379) is a Phosphothreonine. Positions 388 to 400 (ETAKESTAEKDEL) are enriched in basic and acidic residues. Positions 397–400 (KDEL) match the Prevents secretion from ER motif.

Belongs to the heat shock protein 90 family. Homodimer; disulfide-linked. Component of an EIF2 complex at least composed of CELF1/CUGBP1, CALR, CALR3, EIF2S1, EIF2S2, HSP90B1 and HSPA5. Part of a large chaperone multiprotein complex comprising DNAJB11, HSP90B1, HSPA5, HYOU, PDIA2, PDIA4, PDIA6, PPIB, SDF2L1, UGGT1 and very small amounts of ERP29, but not, or at very low levels, CALR nor CANX. Interacts with AIMP1; regulates its retention in the endoplasmic reticulum. Hyperglycosylated form interacts with OS9; promoting its degradation by the endoplasmic reticulum associated degradation (ERAD). Interacts with CNPY3. This interaction is disrupted in the presence of ATP. Interacts with TLR4 and TLR9, but not with TLR3. Interacts with MZB1 in a calcium-dependent manner. Interacts with METTL23. Interacts with IL1B; the interaction facilitates cargo translocation into the ERGIC. Interacts with EIF2AK3. In terms of processing, phosphorylated by CK2. N-glycosylated cotranslationally at Asn-217 by STT3A-containing OST-A complex: this glycosylation is constitutive. In response to various stress, 5 additional facultative sites (Asn-62, Asn-107, Asn-445, Asn-481 and Asn-502) can be glycosylated post-translationally by STT3B-containing OST-B complex, leading to a hyperglycosylated form that is degraded by the ER-associated degradation (ERAD) pathway. In normal conditions, the OST-A complex together with CCDC134 prevent glycosylation at facultative sites during protein folding, thereby preventing hyperglycosylation. Mechanistically, nascent HSP90B1 is tethered during translation to a specialized CCDC134-containing translocon that forms a microenvironment for its folding, in which STT3A associates with the SRT pseudosubstrate motif, and prevents access to facultative glycosylation sites until folding is completed, rendering its facultative sites inaccessible to the OST-B complex.

It is found in the endoplasmic reticulum lumen. The protein resides in the sarcoplasmic reticulum lumen. Its subcellular location is the melanosome. It carries out the reaction ATP + H2O = ADP + phosphate + H(+). In terms of biological role, ATP-dependent chaperone involved in the processing of proteins in the endoplasmic reticulum, regulating their transport. Together with MESD, acts as a modulator of the Wnt pathway by promoting the folding of LRP6, a coreceptor of the canonical Wnt pathway. When associated with CNPY3, required for proper folding of Toll-like receptors. Promotes folding and trafficking of TLR4 to the cell surface. May participate in the unfolding of cytosolic leaderless cargos (lacking the secretion signal sequence) such as the interleukin 1/IL-1 to facilitate their translocation into the ERGIC (endoplasmic reticulum-Golgi intermediate compartment) and secretion; the translocation process is mediated by the cargo receptor TMED10. The sequence is that of Endoplasmin (HSP90B1) from Mesocricetus auratus (Golden hamster).